The sequence spans 250 residues: MSPNHTPDTASVFQLKGSMLAITVLELARNDLEALDRQLAAKVAQAPNFFSNTPLVLALDKLPADEGAIDLPGLMRICRHHGLRTLAIRANRIEDIAAAIAIDLPVLPPSGARERPLEPEPEVVKKPEPAPAPPPPPEPEVRPTRIITSPVRGGQQIYAQGGDLVVTASVSPGAELLADGNIHVYGAMRGRALAGIKGNTKARIFCQQMTAEMVSIAGQYKVCEDLRRDPLWGTSVQVSLSGDVLNITRL.

The disordered stretch occupies residues S110–P143. The span at A112–E128 shows a compositional bias: basic and acidic residues. Pro residues predominate over residues P129–E138.

This sequence belongs to the MinC family. Interacts with MinD and FtsZ.

Cell division inhibitor that blocks the formation of polar Z ring septums. Rapidly oscillates between the poles of the cell to destabilize FtsZ filaments that have formed before they mature into polar Z rings. Prevents FtsZ polymerization. This is Probable septum site-determining protein MinC from Pseudomonas putida (strain ATCC 47054 / DSM 6125 / CFBP 8728 / NCIMB 11950 / KT2440).